A 221-amino-acid chain; its full sequence is MEKKSCMILALDVSDREEALKIAEDVSEFVDAIKVGYPLILATGLGIIRELAEFAPIIADFKVADIPNTNRLICEHVFEAGTDAVIVQGFTGRDSLDACIEIASEYGKDVFVVSEMSHPGGAEFLQPVGEAIARMAAEAGAFGLVAPATRPERVTTIRKIIGNKLTIISPGVGAQGGKASDVIAAGADWVIVGRAIYKAESPREAARKIAAEIEAEFEQEN.

Substrate contacts are provided by residues Asp12, Lys34, 60-69 (DFKVADIPNT), Ser117, 170-180 (PGVGAQGGKAS), Gly193, and Arg194. The active-site Proton donor is Lys62.

It belongs to the OMP decarboxylase family. Type 1 subfamily. In terms of assembly, homodimer.

It catalyses the reaction orotidine 5'-phosphate + H(+) = UMP + CO2. It functions in the pathway pyrimidine metabolism; UMP biosynthesis via de novo pathway; UMP from orotate: step 2/2. Catalyzes the decarboxylation of orotidine 5'-monophosphate (OMP) to uridine 5'-monophosphate (UMP). The sequence is that of Orotidine 5'-phosphate decarboxylase from Methanosarcina barkeri (strain Fusaro / DSM 804).